We begin with the raw amino-acid sequence, 113 residues long: MAGFGLPNFGQLTEAFRKAQQIQQNAQKLQEELDAMEIEGSSPDGRASIWLSGNQQPLRVRLEPSLLAEGQDASETAILAALQSAYEHSTTTMKEQMEELTGGLNLNLPGMSD.

Residues 90–113 are disordered; it reads TTTMKEQMEELTGGLNLNLPGMSD.

The protein belongs to the YbaB/EbfC family. Homodimer.

It is found in the cytoplasm. It localises to the nucleoid. In terms of biological role, binds to DNA and alters its conformation. May be involved in regulation of gene expression, nucleoid organization and DNA protection. In Prochlorococcus marinus (strain MIT 9303), this protein is Nucleoid-associated protein P9303_00241.